The primary structure comprises 240 residues: MNILLIGYGAMNQRVARLAEDKGHEIVGVIDRTSKASTPYSQYQHISECKEADVAIDFSNPELLFPLLEEQFNLPLVIATTGEKETLIQKLETLSQRTPVFFSANMSYGVHALTKILETAVPLLQDFDIELTEAHHNKKVDAPSGTLVKLYDVIKELRDNVSPVYDRHEKTEKRTHDEIGIHAVRGGTIVGEHDILFAGTDETITISHKAQSKDIFANGAIGAAEKLIHKNPGFYTFNNL.

NAD(+) is bound by residues 79 to 81 (ATT) and 103 to 106 (SANM). The active-site Proton donor/acceptor is H135. Residue H136 coordinates (S)-2,3,4,5-tetrahydrodipicolinate. The active-site Proton donor is the K139. 145 to 146 (GT) serves as a coordination point for (S)-2,3,4,5-tetrahydrodipicolinate.

This sequence belongs to the DapB family.

It is found in the cytoplasm. The enzyme catalyses (S)-2,3,4,5-tetrahydrodipicolinate + NAD(+) + H2O = (2S,4S)-4-hydroxy-2,3,4,5-tetrahydrodipicolinate + NADH + H(+). It catalyses the reaction (S)-2,3,4,5-tetrahydrodipicolinate + NADP(+) + H2O = (2S,4S)-4-hydroxy-2,3,4,5-tetrahydrodipicolinate + NADPH + H(+). Its pathway is amino-acid biosynthesis; L-lysine biosynthesis via DAP pathway; (S)-tetrahydrodipicolinate from L-aspartate: step 4/4. Functionally, catalyzes the conversion of 4-hydroxy-tetrahydrodipicolinate (HTPA) to tetrahydrodipicolinate. The sequence is that of 4-hydroxy-tetrahydrodipicolinate reductase from Staphylococcus epidermidis (strain ATCC 12228 / FDA PCI 1200).